The sequence spans 452 residues: Plasminogen-binding protein PgbA (452 aa).

The tract at residues 265-452 is disordered; the sequence is QEAIKEPKKA…RRKALEAGKK (188 aa). 2 stretches are compositionally biased toward basic and acidic residues: residues 284–310 and 317–373; these read LEEKNYQKAERKLDAKEERRYLRDERK and KAME…KEPS. The span at 374–391 shows a compositional bias: polar residues; sequence DGNNATQQGEKQNAPKEN. The span at 392–452 shows a compositional bias: basic and acidic residues; the sequence is NAQKEENKPN…RRKALEAGKK (61 aa).

It localises to the cell surface. Functionally, binds plasminogen, specifically, and in a concentration and lysine-dependent manner. Plasminogen is the precursor of plasmin, a serine protease that cleaves fibrin, fibronectin, laminin and vitronectin. Acquisition of plasminogen/plasmin could enable H.pylori to degrade host components. The sequence is that of Plasminogen-binding protein PgbA (pgbA) from Helicobacter pylori (strain ATCC 700392 / 26695) (Campylobacter pylori).